A 319-amino-acid polypeptide reads, in one-letter code: Beta-ketoacyl-[acyl-carrier-protein] synthase III (319 aa).

Active-site residues include Cys114 and His246. The segment at 247 to 251 is ACP-binding; it reads QANIR. Asn276 is a catalytic residue.

Belongs to the thiolase-like superfamily. FabH family. As to quaternary structure, homodimer.

The protein resides in the cytoplasm. The catalysed reaction is malonyl-[ACP] + acetyl-CoA + H(+) = 3-oxobutanoyl-[ACP] + CO2 + CoA. It participates in lipid metabolism; fatty acid biosynthesis. Its function is as follows. Catalyzes the condensation reaction of fatty acid synthesis by the addition to an acyl acceptor of two carbons from malonyl-ACP. Catalyzes the first condensation reaction which initiates fatty acid synthesis and may therefore play a role in governing the total rate of fatty acid production. Possesses both acetoacetyl-ACP synthase and acetyl transacylase activities. Its substrate specificity determines the biosynthesis of branched-chain and/or straight-chain of fatty acids. This is Beta-ketoacyl-[acyl-carrier-protein] synthase III from Thiobacillus denitrificans (strain ATCC 25259 / T1).